Consider the following 307-residue polypeptide: tRNA dimethylallyltransferase 2 (307 aa).

11-18 (GPTASGKT) is a binding site for ATP. Residue 13–18 (TASGKT) coordinates substrate. The interval 36 to 39 (DSRQ) is interaction with substrate tRNA.

The protein belongs to the IPP transferase family. Monomer. Mg(2+) is required as a cofactor.

The enzyme catalyses adenosine(37) in tRNA + dimethylallyl diphosphate = N(6)-dimethylallyladenosine(37) in tRNA + diphosphate. In terms of biological role, catalyzes the transfer of a dimethylallyl group onto the adenine at position 37 in tRNAs that read codons beginning with uridine, leading to the formation of N6-(dimethylallyl)adenosine (i(6)A). The protein is tRNA dimethylallyltransferase 2 of Phocaeicola vulgatus (strain ATCC 8482 / DSM 1447 / JCM 5826 / CCUG 4940 / NBRC 14291 / NCTC 11154) (Bacteroides vulgatus).